We begin with the raw amino-acid sequence, 253 residues long: MGTILDKIVDQKKKEVAALYETYTPVKEKRKTRSLVKALEQFTVIAEVKRASPSKGDINLHVDVRKQVKTYEECGAGAVSVLTDGQFFKGSFYDLQTAREESSIPLLCKDFIIDKIQIDRAYEAGADIILLIVAALTKEKLKELYSYVLEKGLEAIVEVHDEQELEIAIQLNPHVIGINNRNLKTFEVDLSQTEKLGKRLNEEKLLWISESGIHSKEDIIRVKRAGAKGVLVGEALMTSSSIHTFFEDCKVNI.

It belongs to the TrpC family.

The catalysed reaction is 1-(2-carboxyphenylamino)-1-deoxy-D-ribulose 5-phosphate + H(+) = (1S,2R)-1-C-(indol-3-yl)glycerol 3-phosphate + CO2 + H2O. It participates in amino-acid biosynthesis; L-tryptophan biosynthesis; L-tryptophan from chorismate: step 4/5. This is Indole-3-glycerol phosphate synthase from Bacillus thuringiensis subsp. konkukian (strain 97-27).